A 356-amino-acid polypeptide reads, in one-letter code: 4-hydroxy-3-methylbut-2-en-1-yl diphosphate synthase (flavodoxin) (356 aa).

The [4Fe-4S] cluster site is built by Cys-264, Cys-267, Cys-299, and Glu-306.

This sequence belongs to the IspG family. [4Fe-4S] cluster serves as cofactor.

The catalysed reaction is (2E)-4-hydroxy-3-methylbut-2-enyl diphosphate + oxidized [flavodoxin] + H2O + 2 H(+) = 2-C-methyl-D-erythritol 2,4-cyclic diphosphate + reduced [flavodoxin]. The protein operates within isoprenoid biosynthesis; isopentenyl diphosphate biosynthesis via DXP pathway; isopentenyl diphosphate from 1-deoxy-D-xylulose 5-phosphate: step 5/6. In terms of biological role, converts 2C-methyl-D-erythritol 2,4-cyclodiphosphate (ME-2,4cPP) into 1-hydroxy-2-methyl-2-(E)-butenyl 4-diphosphate. The chain is 4-hydroxy-3-methylbut-2-en-1-yl diphosphate synthase (flavodoxin) from Campylobacter lari (strain RM2100 / D67 / ATCC BAA-1060).